A 357-amino-acid chain; its full sequence is Holliday junction branch migration complex subunit RuvB (357 aa).

A large ATPase domain (RuvB-L) region spans residues 4-195 (TDKLAAKAVS…FGIVARLEFY (192 aa)). ATP-binding positions include Leu34, Arg35, Gly76, Lys79, Thr80, Thr81, 142 to 144 (EDY), Arg185, Tyr195, and Arg232. Thr80 is a binding site for Mg(2+). Residues 196-266 (TPTELARIVT…VADAALAMLD (71 aa)) are small ATPAse domain (RuvB-S). A head domain (RuvB-H) region spans residues 269–357 (AVGFDLMDRK…PARDLWDNNA (89 aa)). DNA-binding residues include Arg305, Arg324, and Arg329.

It belongs to the RuvB family. In terms of assembly, homohexamer. Forms an RuvA(8)-RuvB(12)-Holliday junction (HJ) complex. HJ DNA is sandwiched between 2 RuvA tetramers; dsDNA enters through RuvA and exits via RuvB. An RuvB hexamer assembles on each DNA strand where it exits the tetramer. Each RuvB hexamer is contacted by two RuvA subunits (via domain III) on 2 adjacent RuvB subunits; this complex drives branch migration. In the full resolvosome a probable DNA-RuvA(4)-RuvB(12)-RuvC(2) complex forms which resolves the HJ.

The protein localises to the cytoplasm. The enzyme catalyses ATP + H2O = ADP + phosphate + H(+). Functionally, the RuvA-RuvB-RuvC complex processes Holliday junction (HJ) DNA during genetic recombination and DNA repair, while the RuvA-RuvB complex plays an important role in the rescue of blocked DNA replication forks via replication fork reversal (RFR). RuvA specifically binds to HJ cruciform DNA, conferring on it an open structure. The RuvB hexamer acts as an ATP-dependent pump, pulling dsDNA into and through the RuvAB complex. RuvB forms 2 homohexamers on either side of HJ DNA bound by 1 or 2 RuvA tetramers; 4 subunits per hexamer contact DNA at a time. Coordinated motions by a converter formed by DNA-disengaged RuvB subunits stimulates ATP hydrolysis and nucleotide exchange. Immobilization of the converter enables RuvB to convert the ATP-contained energy into a lever motion, pulling 2 nucleotides of DNA out of the RuvA tetramer per ATP hydrolyzed, thus driving DNA branch migration. The RuvB motors rotate together with the DNA substrate, which together with the progressing nucleotide cycle form the mechanistic basis for DNA recombination by continuous HJ branch migration. Branch migration allows RuvC to scan DNA until it finds its consensus sequence, where it cleaves and resolves cruciform DNA. The chain is Holliday junction branch migration complex subunit RuvB from Ralstonia nicotianae (strain ATCC BAA-1114 / GMI1000) (Ralstonia solanacearum).